Reading from the N-terminus, the 528-residue chain is Chaperonin GroEL, chloroplastic (528 aa).

Residues 29–32 (TLGP), 86–90 (DGTTT), Gly-414, and Asp-496 each bind ATP.

Belongs to the chaperonin (HSP60) family. As to quaternary structure, forms a cylinder of 14 subunits composed of two heptameric rings stacked back-to-back. Interacts with the co-chaperonin GroES.

Its subcellular location is the plastid. It is found in the chloroplast. The enzyme catalyses ATP + H2O + a folded polypeptide = ADP + phosphate + an unfolded polypeptide.. Functionally, together with its co-chaperonin GroES, plays an essential role in assisting protein folding. The GroEL-GroES system forms a nano-cage that allows encapsulation of the non-native substrate proteins and provides a physical environment optimized to promote and accelerate protein folding. The sequence is that of Chaperonin GroEL, chloroplastic from Gracilaria tenuistipitata var. liui (Red alga).